Reading from the N-terminus, the 353-residue chain is Protein-glutamate methylesterase/protein-glutamine glutaminase (353 aa).

The 118-residue stretch at 6–123 folds into the Response regulatory domain; that stretch reads RVLVIDDSAL…ARGLKAMLSE (118 aa). A 4-aspartylphosphate modification is found at aspartate 57. A CheB-type methylesterase domain is found at 159–351; it reads AESTDKVIAI…PRIVDLLSER (193 aa). Active-site residues include serine 171, histidine 197, and aspartate 293.

The protein belongs to the CheB family. In terms of processing, phosphorylated by CheA. Phosphorylation of the N-terminal regulatory domain activates the methylesterase activity.

The protein resides in the cytoplasm. It carries out the reaction [protein]-L-glutamate 5-O-methyl ester + H2O = L-glutamyl-[protein] + methanol + H(+). The catalysed reaction is L-glutaminyl-[protein] + H2O = L-glutamyl-[protein] + NH4(+). Involved in chemotaxis. Part of a chemotaxis signal transduction system that modulates chemotaxis in response to various stimuli. Catalyzes the demethylation of specific methylglutamate residues introduced into the chemoreceptors (methyl-accepting chemotaxis proteins or MCP) by CheR. Also mediates the irreversible deamidation of specific glutamine residues to glutamic acid. The sequence is that of Protein-glutamate methylesterase/protein-glutamine glutaminase from Syntrophotalea carbinolica (strain DSM 2380 / NBRC 103641 / GraBd1) (Pelobacter carbinolicus).